The following is a 553-amino-acid chain: Cytochrome P450 86A22 (553 aa).

A helical transmembrane segment spans residues 8-24; it reads MIVAIVAAYLLWFKSIT. Residue C459 coordinates heme.

This sequence belongs to the cytochrome P450 family. Requires heme as cofactor. As to expression, mostly expressed in the developing stigma of floral buds. Weakly detected in leaves, stems and flowers.

It is found in the membrane. The catalysed reaction is (9Z)-octadecenoyl-CoA + reduced [NADPH--hemoprotein reductase] + O2 = (9Z)-18-hydroxyoctadecenoyl-CoA + oxidized [NADPH--hemoprotein reductase] + H2O + H(+). It carries out the reaction (9Z,12Z)-octadecadienoyl-CoA + reduced [NADPH--hemoprotein reductase] + O2 = (9Z,12Z)-18-hydroxyoctadecadienoyl-CoA + oxidized [NADPH--hemoprotein reductase] + H2O + H(+). Functionally, fatty acyl-CoA omega-hydroxylase essential for the production of omega-hydroxy fatty acids and the biosynthesis of triacylglycerol-/diacylglycerol-based estolide polyesters in the stigma. Substrate preference is 16:0-CoA &gt; 18:1-CoA &gt; 18:0-CoA. The sequence is that of Cytochrome P450 86A22 from Petunia hybrida (Petunia).